We begin with the raw amino-acid sequence, 100 residues long: Small ubiquitin-related modifier 1 (100 aa).

A compositionally biased stretch (basic and acidic residues) spans 1-12 (MSANQEEDKKPG). The segment at 1-21 (MSANQEEDKKPGDGGAHINLK) is disordered. In terms of domain architecture, Ubiquitin-like spans 16–93 (AHINLKVKGQ…IDAMLHQTGG (78 aa)). Glycine 93 is covalently cross-linked (Glycyl lysine isopeptide (Gly-Lys) (interchain with K-? in acceptor proteins)).

This sequence belongs to the ubiquitin family. SUMO subfamily. Interacts with SAE2, SCE1, SIZ1 and MMS21. Interacts with HSFA2. Covalently attached to ABI5, FLD, GTE3, HSFA2 and ICE1.

It is found in the nucleus. The protein localises to the cytoplasm. Its function is as follows. Ubiquitin-like protein which can be covalently attached to target lysines as a monomer. Does not seem to be involved in protein degradation and may function as an antagonist of ubiquitin in the degradation process. Required for the massive protein sumoylation in the nucleus induced by heat shock and controlled by SIZ1. Involved in the regulation of the heat stress transcription factor HSFA2 in acquired thermotolerance. In Arabidopsis thaliana (Mouse-ear cress), this protein is Small ubiquitin-related modifier 1.